The sequence spans 284 residues: MDAIKKKMQMLKLDKENALDRAEQAEADKKAAEDRSKQLEDELVSLQKKLKGTEDELDKYSEALKDAQEKLELAEKKATDAEADVASLNRRIQLVEEELDRAQERLATALQKLEEAEKAADESERGMKVIESRAQKDEEKMEIQEIQLKEAKHIAEDADRKYEEVARKLVIIESDLERAEERAELSEGKCAELEEELKTVTNNLKSLEAQAEKYSQKEDRYEEEIKVLSDKLKEAETRAEFAERSVTKLEKSIDDLEDELYAQKLKYKAISEELDHALNDMTSI.

Methionine 1 bears the N-acetylmethionine mark. The tract at residues 1–38 (MDAIKKKMQMLKLDKENALDRAEQAEADKKAAEDRSKQ) is disordered. Residues 1–284 (MDAIKKKMQM…DHALNDMTSI (284 aa)) are a coiled coil. Basic and acidic residues predominate over residues 12 to 38 (KLDKENALDRAEQAEADKKAAEDRSKQ). Phosphoserine occurs at positions 31, 45, and 51. Residues 116–136 (AEKAADESERGMKVIESRAQK) are disordered. Serine 174, serine 186, and serine 206 each carry phosphoserine. Lysine 213 bears the N6-acetyllysine mark. Position 252 is a phosphoserine (serine 252). Phosphotyrosine is present on tyrosine 261. A Phosphoserine modification is found at serine 271. The residue at position 283 (serine 283) is a Phosphoserine; by DAPK1.

The protein belongs to the tropomyosin family. Homodimer. Heterodimer of an alpha (TPM1, TPM3 or TPM4) and a beta (TPM2) chain. Interacts with HRG (via the HRR domain); the interaction contributes to the antiangiogenic properties of the histidine/proline-rich region (HRR) of HRG. Interacts (via N-terminus) with LMOD2 (via N-terminus) and TMOD1 (via N-terminus). In terms of processing, phosphorylated at Ser-283 by DAPK1 in response to oxidative stress and this phosphorylation enhances stress fiber formation in endothelial cells. As to expression, detected in primary breast cancer tissues but undetectable in normal breast tissues in Sudanese patients. Isoform 1 is expressed in adult and fetal skeletal muscle and cardiac tissues, with higher expression levels in the cardiac tissues. Isoform 10 is expressed in adult and fetal cardiac tissues, but not in skeletal muscle.

The protein resides in the cytoplasm. Its subcellular location is the cytoskeleton. Functionally, binds to actin filaments in muscle and non-muscle cells. Plays a central role, in association with the troponin complex, in the calcium dependent regulation of vertebrate striated muscle contraction. Smooth muscle contraction is regulated by interaction with caldesmon. In non-muscle cells is implicated in stabilizing cytoskeleton actin filaments. The polypeptide is Tropomyosin alpha-1 chain (TPM1) (Homo sapiens (Human)).